We begin with the raw amino-acid sequence, 361 residues long: Phospho-N-acetylmuramoyl-pentapeptide-transferase (361 aa).

Helical transmembrane passes span 25 to 45, 73 to 93, 98 to 118, 139 to 159, 168 to 188, 200 to 220, 237 to 257, 264 to 284, 290 to 310, and 339 to 359; these read RGILAALTALFLSLWMGPAVI, TMGGSLILLTVTLSVLLWGDL, VWLVLAVMICFGAIGWYDDWI, IFGLAAGLFLYYTADVPAAIT, IALPLAGVSFVVIAYFWIVGF, GLAIMPTVLVACALGVFAYAS, AGELIIICSAIAGAGLGFLWF, VFMGDIGALSLGAVLGTIAVI, VLVIMGGVFVIETLSVMIQVV, and VIVRFWIISVVLVLIGLATLK.

It belongs to the glycosyltransferase 4 family. MraY subfamily. Mg(2+) serves as cofactor.

It localises to the cell inner membrane. It carries out the reaction UDP-N-acetyl-alpha-D-muramoyl-L-alanyl-gamma-D-glutamyl-meso-2,6-diaminopimeloyl-D-alanyl-D-alanine + di-trans,octa-cis-undecaprenyl phosphate = di-trans,octa-cis-undecaprenyl diphospho-N-acetyl-alpha-D-muramoyl-L-alanyl-D-glutamyl-meso-2,6-diaminopimeloyl-D-alanyl-D-alanine + UMP. Its pathway is cell wall biogenesis; peptidoglycan biosynthesis. Catalyzes the initial step of the lipid cycle reactions in the biosynthesis of the cell wall peptidoglycan: transfers peptidoglycan precursor phospho-MurNAc-pentapeptide from UDP-MurNAc-pentapeptide onto the lipid carrier undecaprenyl phosphate, yielding undecaprenyl-pyrophosphoryl-MurNAc-pentapeptide, known as lipid I. The sequence is that of Phospho-N-acetylmuramoyl-pentapeptide-transferase from Xanthomonas euvesicatoria pv. vesicatoria (strain 85-10) (Xanthomonas campestris pv. vesicatoria).